We begin with the raw amino-acid sequence, 302 residues long: Haloalkane dehalogenase (302 aa).

An AB hydrolase-1 domain is found at 48-152 (PILLMHGEPS…VVVSNTGLPI (105 aa)). The active-site Nucleophile is Asp-123. The Proton donor role is filled by Asp-249. His-278 serves as the catalytic Proton acceptor.

This sequence belongs to the haloalkane dehalogenase family. Type 1 subfamily. As to quaternary structure, monomer.

The enzyme catalyses 1-haloalkane + H2O = a halide anion + a primary alcohol + H(+). In terms of biological role, catalyzes hydrolytic cleavage of carbon-halogen bonds in halogenated aliphatic compounds, leading to the formation of the corresponding primary alcohols, halide ions and protons. The chain is Haloalkane dehalogenase from Caulobacter vibrioides (strain ATCC 19089 / CIP 103742 / CB 15) (Caulobacter crescentus).